Here is a 404-residue protein sequence, read N- to C-terminus: D-galactonate dehydratase family member Ent638_1932 (404 aa).

Substrate contacts are provided by Asn-37 and His-122. Tyr-159 acts as the Proton donor/acceptor in catalysis. A Mg(2+)-binding site is contributed by Asp-212. Catalysis depends on His-214, which acts as the Proton donor/acceptor. Positions 238 and 264 each coordinate Mg(2+). 5 residues coordinate substrate: Glu-264, Arg-285, His-314, Asp-318, and Glu-341.

The protein belongs to the mandelate racemase/muconate lactonizing enzyme family. GalD subfamily. Mg(2+) is required as a cofactor.

The enzyme catalyses D-mannonate = 2-dehydro-3-deoxy-D-gluconate + H2O. Its function is as follows. Has low D-mannonate dehydratase activity (in vitro), suggesting that this is not a physiological substrate and that it has no significant role in D-mannonate degradation in vivo. Has no detectable activity with a panel of 70 other acid sugars (in vitro). This is D-galactonate dehydratase family member Ent638_1932 from Enterobacter sp. (strain 638).